Consider the following 209-residue polypeptide: Small ribosomal subunit protein uS4 (209 aa).

The region spanning 98–159 is the S4 RNA-binding domain; sequence RRLDSAVYRL…KSRKITRIND (62 aa).

It belongs to the universal ribosomal protein uS4 family. As to quaternary structure, part of the 30S ribosomal subunit. Contacts protein S5. The interaction surface between S4 and S5 is involved in control of translational fidelity.

Functionally, one of the primary rRNA binding proteins, it binds directly to 16S rRNA where it nucleates assembly of the body of the 30S subunit. In terms of biological role, with S5 and S12 plays an important role in translational accuracy. This chain is Small ribosomal subunit protein uS4, found in Syntrophotalea carbinolica (strain DSM 2380 / NBRC 103641 / GraBd1) (Pelobacter carbinolicus).